A 214-amino-acid polypeptide reads, in one-letter code: Probable adenylyl-sulfate kinase (214 aa).

Residue 13-20 (GLSGAGKT) coordinates ATP. S87 acts as the Phosphoserine intermediate in catalysis. The disordered stretch occupies residues 174 to 199 (WNRTNTFPLKSRPNPPHRHKSKSSRA).

Belongs to the APS kinase family.

It carries out the reaction adenosine 5'-phosphosulfate + ATP = 3'-phosphoadenylyl sulfate + ADP + H(+). It participates in sulfur metabolism; hydrogen sulfide biosynthesis; sulfite from sulfate: step 2/3. Functionally, catalyzes the synthesis of activated sulfate. In Pseudomonas aeruginosa, this protein is Probable adenylyl-sulfate kinase.